A 310-amino-acid chain; its full sequence is Solute carrier family 25 member 47 (310 aa).

Solcar repeat units lie at residues Met1 to His80, Pro93 to Trp208, and Pro217 to Leu304. A run of 6 helical transmembrane segments spans residues Phe3–Val23, Gly55–His75, Ile98–Ser114, Ser194–Thr210, Val219–Pro239, and Leu280–Tyr298.

Belongs to the mitochondrial carrier (TC 2.A.29) family. In terms of tissue distribution, specifically expressed in liver (at protein level).

The protein resides in the mitochondrion inner membrane. The protein localises to the mitochondrion outer membrane. It carries out the reaction NAD(+)(in) = NAD(+)(out). It catalyses the reaction acetyl-CoA(in) = acetyl-CoA(out). Its function is as follows. Mitochondrial NAD(+) transporter that acts as a 'metabolic gate' in hepatic lipogenesis. Provides NAD(+) substrate to mitochondrial SIRT3 deacetylase and enables its NAD(+)-dependent activities in mitochondrial energy metabolism. This triggers downstream activation of PRKAA1/AMPK-alpha signaling cascade that negatively regulates sterol regulatory element-binding protein (SREBP) transcriptional activities and ATP-consuming lipogenesis to restore cellular energy balance. May transport other mitochondrial metabolites having an aromatic nucleotide and phosphate groups, such as acetyl-CoA. Does not transport amino acids. The transport mechanism remains to be elucidated. The sequence is that of Solute carrier family 25 member 47 from Mus musculus (Mouse).